A 426-amino-acid polypeptide reads, in one-letter code: Pannexin-1 (426 aa).

The Cytoplasmic portion of the chain corresponds to 1–40; sequence MAIAQLATEYVFSDFLLKEPTEPKFKGLRLELAVDKMVTC. S-nitrosocysteine is present on Cys-40. Residues 41-61 traverse the membrane as a helical segment; the sequence is IAVGLPLLLISLAFAQEISIG. The Extracellular portion of the chain corresponds to 62–106; the sequence is TQISCFSPSSFSWRQAAFVDSYCWAAVQQKNSLQSESGNLPLWLH. 2 cysteine pairs are disulfide-bonded: Cys-66-Cys-265 and Cys-84-Cys-246. The helical transmembrane segment at 107-127 threads the bilayer; it reads KFFPYILLLFAILLYLPPLFW. Residues 128–217 lie on the Cytoplasmic side of the membrane; sequence RFAAAPHICS…NLIIKYISCR (90 aa). Residue Tyr-199 is modified to Phosphotyrosine. The helical transmembrane segment at 218–238 threads the bilayer; sequence LLTLIIILLACIYLGYYFSLS. The Extracellular segment spans residues 239-266; that stretch reads SLSDEFVCSIKSGILRNDSTVPDQFQCK. An N-linked (GlcNAc...) asparagine glycan is attached at Asn-255. A helical transmembrane segment spans residues 267–287; that stretch reads LIAVGIFQLLSVINLVVYVLL. Over 288-426 the chain is Cytoplasmic; that stretch reads APVVVYTLFV…ARQRLLDSSC (139 aa). At Cys-347 the chain carries S-nitrosocysteine. Polar residues predominate over residues 405-414; sequence DSETKANNGE. The interval 405–426 is disordered; the sequence is DSETKANNGEKNARQRLLDSSC. Residues 415-426 show a composition bias toward basic and acidic residues; sequence KNARQRLLDSSC.

This sequence belongs to the pannexin family. Homoheptameric. In terms of processing, S-nitrosylation inhibits channel currents and ATP release. Post-translationally, N-glycosylation plays a role in cell surface targeting. Glycosylation at its extracellular surface makes unlikely that two oligomers could dock to form an intercellular channel such as in gap junctions. Exists in three glycosylation states: non-glycosylated (GLY0), high-mannose glycosylated (GLY1), and fully mature glycosylated (GLY2). Cleaved by CASP3 and CASP7 during apoptosis. Cleavage opens the channel for the release of metabolites and induces plasma membrane permeability during apoptosis. In terms of processing, phosphorylated at Tyr-199 by SRC. Phosphorylation activates ATP release. Constitutively phosphorylated in vascular smooth muscle cells. As to expression, widely expressed. Highest expression is observed in oocytes and brain. Detected at very low levels in sperm cells.

Its subcellular location is the cell membrane. The protein resides in the endoplasmic reticulum membrane. It carries out the reaction chloride(in) = chloride(out). It catalyses the reaction iodide(out) = iodide(in). The catalysed reaction is ATP(in) = ATP(out). The enzyme catalyses K(+)(in) = K(+)(out). It carries out the reaction Ca(2+)(in) = Ca(2+)(out). It catalyses the reaction Na(+)(in) = Na(+)(out). The catalysed reaction is nitrate(in) = nitrate(out). The enzyme catalyses L-aspartate(out) = L-aspartate(in). It carries out the reaction L-glutamate(out) = L-glutamate(in). It catalyses the reaction D-gluconate(in) = D-gluconate(out). The catalysed reaction is spermidine(in) = spermidine(out). Ion channel involved in a variety of physiological functions such as blood pressure regulation, apoptotic cell clearance and oogenesis. Forms anion-selective channels with relatively low conductance and an order of permeabilities: nitrate&gt;iodide&gt;chlroride&gt;&gt;aspartate=glutamate=gluconate. Can release ATP upon activation through phosphorylation or cleavage at C-terminus. May play a role as a Ca(2+)-leak channel to regulate ER Ca(2+) homeostasis. Functionally, during apoptosis, the C terminal tail is cleaved by caspases, which opens the main pore acting as a large-pore ATP efflux channel with a broad distribution, which allows the regulated release of molecules and ions smaller than 1 kDa, such as nucleotides ATP and UTP, and selective plasma membrane permeability to attract phagocytes that engulf the dying cells. The sequence is that of Pannexin-1 from Homo sapiens (Human).